Consider the following 179-residue polypeptide: Probable phosphopantothenoylcysteine decarboxylase (179 aa).

Residue Asn-124 participates in substrate binding. Cys-157 acts as the Proton donor in catalysis.

This sequence belongs to the HFCD (homooligomeric flavin containing Cys decarboxylase) superfamily. It depends on FMN as a cofactor.

The enzyme catalyses N-[(R)-4-phosphopantothenoyl]-L-cysteine + H(+) = (R)-4'-phosphopantetheine + CO2. It participates in cofactor biosynthesis; coenzyme A biosynthesis; CoA from (R)-pantothenate: step 3/5. Its function is as follows. Catalyzes the decarboxylation of 4'-phosphopantothenoylcysteine to 4'-phosphopantetheine. This Streptococcus mutans serotype c (strain ATCC 700610 / UA159) protein is Probable phosphopantothenoylcysteine decarboxylase (coaC).